Reading from the N-terminus, the 74-residue chain is Antimicrobial peptide AcrAP1 (74 aa).

Positions 1–22 (MEIKYLLTVFLVLLIVSDHCQA) are cleaved as a signal peptide. At Lys40 the chain carries Lysine amide. Positions 46-74 (DLDGQIDRFRNFRKRDAELEELLSKLPIY) are excised as a propeptide.

This sequence belongs to the non-disulfide-bridged peptide (NDBP) superfamily. Short antimicrobial peptide (group 4) family. Expressed by the venom gland.

The protein resides in the secreted. The protein localises to the target cell membrane. Has antimicrobial activity against the Gram-positive bacteria S.aureus (MIC=8 uM) and the yeast C.albicans (MIC=16 uM). Causes hemolysis on horse erythrocytes (64 uM for 100% hemolysis). Minimum bactericidal concentrations have also been tested against S.aureus and is four-fold higher (MBC=32 uM). The protein is Antimicrobial peptide AcrAP1 of Androctonus crassicauda (Arabian fat-tailed scorpion).